The chain runs to 384 residues: MSTLVQCGYFERGQCQSCRHIKLPMAQQLAAKNLELQQLLAPFVDKTEPQFLPPVVGDSSGFRNKAKMVALGAAHAPVLGIVSPSGEAVSLCDCLLYPTDMQALLHRLERFVQQAGIPPYRVDKAKGELKFILLTRSQVRGEYMLRFVLRSRDAIARIERELPTLMAEYPQIKVVSVNLQPVHMAILEGEEEIFLTENTRLEERFNDVPLFIRPKSFFQTNPQVAAKLYQTAREWVADFAPASLWDLFCGVGGFGLHCAAKDIPLTGIEIEAEAIACAKMSAQLMGLDKVEFMALDSTDFAKGEAAQTKPELIIVNPPRRGIGESLCHSLSEFAPKAILYSSCNPKTLAKDLGHIRGYRLTKVQLFDLFPHSDHFEVLALLVKD.

The [4Fe-4S] cluster site is built by cysteine 7, cysteine 15, cysteine 18, and cysteine 94. Positions 219, 248, 269, and 316 each coordinate S-adenosyl-L-methionine. Cysteine 343 (nucleophile) is an active-site residue.

This sequence belongs to the class I-like SAM-binding methyltransferase superfamily. RNA M5U methyltransferase family. RlmC subfamily.

It carries out the reaction uridine(747) in 23S rRNA + S-adenosyl-L-methionine = 5-methyluridine(747) in 23S rRNA + S-adenosyl-L-homocysteine + H(+). In terms of biological role, catalyzes the formation of 5-methyl-uridine at position 747 (m5U747) in 23S rRNA. This is 23S rRNA (uracil(747)-C(5))-methyltransferase RlmC from Shewanella sp. (strain ANA-3).